The following is a 211-amino-acid chain: Large ribosomal subunit protein uL3 (211 aa).

Residue glutamine 151 is modified to N5-methylglutamine.

Belongs to the universal ribosomal protein uL3 family. As to quaternary structure, part of the 50S ribosomal subunit. Forms a cluster with proteins L14 and L19. Methylated by PrmB.

Its function is as follows. One of the primary rRNA binding proteins, it binds directly near the 3'-end of the 23S rRNA, where it nucleates assembly of the 50S subunit. In Francisella tularensis subsp. tularensis (strain FSC 198), this protein is Large ribosomal subunit protein uL3.